Here is a 488-residue protein sequence, read N- to C-terminus: Wax ester synthase/diacylglycerol acyltransferase 8 (488 aa).

The Cytoplasmic segment spans residues 1–195 (MKNEEEEPLS…AIFTIGSTMR (195 aa)). His135 serves as the catalytic Proton acceptor. Residues 196-214 (LIWNTLVDMFLLFATMLFL) form a helical membrane-spanning segment. The Lumenal portion of the chain corresponds to 215 to 488 (KDTKTPLKGG…RGLLKEAYKV (274 aa)). N-linked (GlcNAc...) asparagine glycans are attached at residues Asn238, Asn252, Asn353, and Asn397.

This sequence in the N-terminal section; belongs to the long-chain O-acyltransferase family. In terms of tissue distribution, mostly expressed in flowers and siliques and at low levels in stems.

Its subcellular location is the cell membrane. The protein localises to the endoplasmic reticulum membrane. The catalysed reaction is an acyl-CoA + a 1,2-diacyl-sn-glycerol = a triacyl-sn-glycerol + CoA. It carries out the reaction a long chain fatty alcohol + a fatty acyl-CoA = a wax ester + CoA. It participates in glycerolipid metabolism; triacylglycerol biosynthesis. It functions in the pathway lipid metabolism. In terms of biological role, bifunctional wax ester synthase/diacylglycerol acyltransferase. Involved in cuticular wax biosynthesis. This is Wax ester synthase/diacylglycerol acyltransferase 8 from Arabidopsis thaliana (Mouse-ear cress).